We begin with the raw amino-acid sequence, 216 residues long: Potassium-transporting ATPase KdpC subunit (216 aa).

A helical transmembrane segment spans residues 12–32 (LLGVSLLVFGLLYQGSLMAIG). The segment covering 197–207 (QNETDQNSDMN) has biased composition (polar residues). Positions 197-216 (QNETDQNSDMNASEIANGDH) are disordered.

It belongs to the KdpC family. In terms of assembly, the system is composed of three essential subunits: KdpA, KdpB and KdpC. The complex also contains KdpF, a small non-essential subunit.

The protein localises to the cell membrane. Functionally, part of the high-affinity ATP-driven potassium transport (or Kdp) system, which catalyzes the hydrolysis of ATP coupled with the electrogenic transport of potassium into the cytoplasm. This subunit acts as a catalytic chaperone that increases the ATP-binding affinity of the ATP-hydrolyzing subunit KdpB by the formation of a transient KdpB/KdpC/ATP ternary complex. The Kdp system is essential for growth under K(+) limitation, and for survival under desiccation and salt crystal inclusion. The sequence is that of Potassium-transporting ATPase KdpC subunit from Halobacterium salinarum (strain ATCC 29341 / DSM 671 / R1).